A 144-amino-acid chain; its full sequence is Large ribosomal subunit protein uL15 (144 aa).

The segment at 1-48 (MIKLECLQDPSPRKRRTKLLGRGPSSGHGKTSGRGHKGDGSRSGYKRR) is disordered.

Belongs to the universal ribosomal protein uL15 family. Part of the 50S ribosomal subunit.

Binds to the 23S rRNA. The sequence is that of Large ribosomal subunit protein uL15 from Chlamydia trachomatis serovar L2 (strain ATCC VR-902B / DSM 19102 / 434/Bu).